Reading from the N-terminus, the 512-residue chain is Protein maelstrom homolog (512 aa).

Residues 9 to 75 constitute a DNA-binding region (HMG box); sequence AKGPFYFFMM…NPKEAGGYGE (67 aa). Disordered stretches follow at residues 49-72, 360-421, and 439-465; these read APHE…EAGG, RMSK…GTRA, and QSAN…DPQS. Polar residues predominate over residues 360-370; it reads RMSKLTTTSDN. Basic and acidic residues predominate over residues 379–388; the sequence is RSTDRTDRDV. Composition is skewed to polar residues over residues 393-421 and 439-449; these read IYSS…GTRA and QSANRSPTKKN. Over residues 451–464 the composition is skewed to basic and acidic residues; sequence WSRENKLTEVRDPQ.

This sequence belongs to the maelstrom family.

It localises to the cytoplasm. The protein resides in the nucleus. Functionally, plays a central role during gametogenesis by repressing transposable elements and preventing their mobilization, which is essential for the germline integrity. Probably acts via the piRNA metabolic process, which mediates the repression of transposable elements during meiosis by forming complexes composed of piRNAs and Piwi proteins and governs the repression of transposons. The polypeptide is Protein maelstrom homolog (mael) (Culex quinquefasciatus (Southern house mosquito)).